A 72-amino-acid chain; its full sequence is MNYYGNYYGGLGYGYGGFDDLGYGYGCGCGSFRRLGYGGGYGGYGYGSGFGGYGYRSCRPSCYGGYGFSGFY.

Belongs to the KRTAP type 19 family. Interacts with hair keratins.

Functionally, in the hair cortex, hair keratin intermediate filaments are embedded in an interfilamentous matrix, consisting of hair keratin-associated proteins (KRTAP), which are essential for the formation of a rigid and resistant hair shaft through their extensive disulfide bond cross-linking with abundant cysteine residues of hair keratins. The matrix proteins include the high-sulfur and high-glycine-tyrosine keratins. The chain is Keratin-associated protein 19-5 (KRTAP19-5) from Homo sapiens (Human).